The sequence spans 339 residues: uncharacterized protein (339 aa).

The region spanning 13 to 243 (LSLNKLDVGF…PATPFICEFI (231 aa)) is the ABC transporter domain. 45–52 (GPSGSGKS) is an ATP binding site.

The protein belongs to the ABC transporter superfamily.

Its subcellular location is the cell inner membrane. Functionally, probably part of a binding-protein-dependent transport system y4fNOP. Probably responsible for energy coupling to the transport system. This is an uncharacterized protein from Sinorhizobium fredii (strain NBRC 101917 / NGR234).